The following is a 208-amino-acid chain: Probable GTP-binding protein EngB (208 aa).

The EngB-type G domain occupies 23–205 (LTSEMVILGR…RQTLLKYLLT (183 aa)). Residues 31–38 (GRSNVGKS), 57–61 (GKTRL), 84–87 (DLPG), 154–157 (TKFD), and 182–184 (FNA) each bind GTP. Positions 38 and 59 each coordinate Mg(2+).

This sequence belongs to the TRAFAC class TrmE-Era-EngA-EngB-Septin-like GTPase superfamily. EngB GTPase family. It depends on Mg(2+) as a cofactor.

Functionally, necessary for normal cell division and for the maintenance of normal septation. In Helicobacter pylori (strain J99 / ATCC 700824) (Campylobacter pylori J99), this protein is Probable GTP-binding protein EngB.